Reading from the N-terminus, the 135-residue chain is Small ribosomal subunit protein uS12 (135 aa).

A 3-methylthioaspartic acid modification is found at Asp89. Residues 108 to 135 are disordered; sequence NKRTVSRSKYGTKKAKATDKKATDNKKK. The segment covering 111–122 has biased composition (basic residues); that stretch reads TVSRSKYGTKKA. The segment covering 123–135 has biased composition (basic and acidic residues); that stretch reads KATDKKATDNKKK.

This sequence belongs to the universal ribosomal protein uS12 family. In terms of assembly, part of the 30S ribosomal subunit. Contacts proteins S8 and S17. May interact with IF1 in the 30S initiation complex.

Functionally, with S4 and S5 plays an important role in translational accuracy. In terms of biological role, interacts with and stabilizes bases of the 16S rRNA that are involved in tRNA selection in the A site and with the mRNA backbone. Located at the interface of the 30S and 50S subunits, it traverses the body of the 30S subunit contacting proteins on the other side and probably holding the rRNA structure together. The combined cluster of proteins S8, S12 and S17 appears to hold together the shoulder and platform of the 30S subunit. The sequence is that of Small ribosomal subunit protein uS12 from Helicobacter pylori (strain P12).